Reading from the N-terminus, the 225-residue chain is Phosphatidylserine decarboxylase proenzyme (225 aa).

Catalysis depends on serine 195, which acts as the Schiff-base intermediate with substrate; via pyruvic acid. Position 195 is a pyruvic acid (Ser); by autocatalysis (serine 195).

It belongs to the phosphatidylserine decarboxylase family. PSD-A subfamily. Heterodimer of a large membrane-associated beta subunit and a small pyruvoyl-containing alpha subunit. Pyruvate is required as a cofactor. Is synthesized initially as an inactive proenzyme. Formation of the active enzyme involves a self-maturation process in which the active site pyruvoyl group is generated from an internal serine residue via an autocatalytic post-translational modification. Two non-identical subunits are generated from the proenzyme in this reaction, and the pyruvate is formed at the N-terminus of the alpha chain, which is derived from the carboxyl end of the proenzyme. The post-translation cleavage follows an unusual pathway, termed non-hydrolytic serinolysis, in which the side chain hydroxyl group of the serine supplies its oxygen atom to form the C-terminus of the beta chain, while the remainder of the serine residue undergoes an oxidative deamination to produce ammonia and the pyruvoyl prosthetic group on the alpha chain.

It localises to the cell membrane. The enzyme catalyses a 1,2-diacyl-sn-glycero-3-phospho-L-serine + H(+) = a 1,2-diacyl-sn-glycero-3-phosphoethanolamine + CO2. It participates in phospholipid metabolism; phosphatidylethanolamine biosynthesis; phosphatidylethanolamine from CDP-diacylglycerol: step 2/2. In terms of biological role, catalyzes the formation of phosphatidylethanolamine (PtdEtn) from phosphatidylserine (PtdSer). The protein is Phosphatidylserine decarboxylase proenzyme of Gluconobacter oxydans (strain 621H) (Gluconobacter suboxydans).